The primary structure comprises 361 residues: Sensor protein VanSC (361 aa).

2 helical membrane passes run 16-36 and 59-79; these read FVTT…IRFI and WLFC…IYYM. One can recognise a Histidine kinase domain in the interval 144–359; the sequence is YLAHDLRTPL…IFNVRLPKPA (216 aa). Histidine 147 bears the Phosphohistidine; by autocatalysis mark. Glutamate 252 serves as a coordination point for Mg(2+).

In terms of processing, autophosphorylated.

Its subcellular location is the membrane. The catalysed reaction is ATP + protein L-histidine = ADP + protein N-phospho-L-histidine.. The chain is Sensor protein VanSC from Enterococcus gallinarum.